The chain runs to 653 residues: Alpha-L-iduronidase (653 aa).

The N-terminal stretch at 1-27 (MRPLRPRAALLALLASLLAAPPVAPAE) is a signal peptide. Residues Pro54, Leu56, and His58 each contribute to the alpha-D-mannopyranose site. Residue His91 coordinates alpha-L-iduronate. N-linked (GlcNAc...) asparagine glycosylation occurs at Asn110. Residues Asn181 and Glu182 each contribute to the alpha-L-iduronate site. The Proton donor role is filled by Glu182. Asn190 carries N-linked (GlcNAc...) asparagine glycosylation. Positions 264, 299, and 305 each coordinate alpha-L-iduronate. Glu299 functions as the Nucleophile in the catalytic mechanism. Trp306 is a binding site for alpha-D-mannopyranose. N-linked (GlcNAc...) asparagine glycosylation occurs at Asn336. Alpha-L-iduronate-binding residues include Asp349 and Arg363. Residues Asn372, Asn415, and Asn451 are each glycosylated (N-linked (GlcNAc...) asparagine). Alpha-D-mannopyranose is bound by residues Arg488 and Arg492. A beta-D-mannose-binding site is contributed by Arg492. Cys541 and Cys577 form a disulfide bridge.

It belongs to the glycosyl hydrolase 39 family. In terms of assembly, monomer. In terms of processing, N-glycosylation at Asn-372 contributes to substrate binding and is required for full enzymatic activity. Ubiquitous.

The protein localises to the lysosome. The catalysed reaction is Hydrolysis of unsulfated alpha-L-iduronosidic linkages in dermatan sulfate.. In Homo sapiens (Human), this protein is Alpha-L-iduronidase (IDUA).